Here is a 165-residue protein sequence, read N- to C-terminus: Small ribosomal subunit protein uS17m (165 aa).

The protein belongs to the universal ribosomal protein uS17 family. In terms of assembly, component of the mitochondrial small ribosomal subunit (mt-SSU). Mature N.crassa 74S mitochondrial ribosomes consist of a small (37S) and a large (54S) subunit. The 37S small subunit contains a 16S ribosomal RNA (16S mt-rRNA) and 32 different proteins. The 54S large subunit contains a 23S rRNA (23S mt-rRNA) and 42 different proteins. uS17m interacts with the F(1)-ATPase inhibitor IF(1) dimer.

It localises to the mitochondrion. Component of the mitochondrial ribosome (mitoribosome), a dedicated translation machinery responsible for the synthesis of mitochondrial genome-encoded proteins, including at least some of the essential transmembrane subunits of the mitochondrial respiratory chain. The mitoribosomes are attached to the mitochondrial inner membrane and translation products are cotranslationally integrated into the membrane. The polypeptide is Small ribosomal subunit protein uS17m (mrps17) (Neurospora crassa (strain ATCC 24698 / 74-OR23-1A / CBS 708.71 / DSM 1257 / FGSC 987)).